We begin with the raw amino-acid sequence, 224 residues long: UPF0758 protein VSAL_I0192 (224 aa).

An MPN domain is found at 102–224 (ALTSPEHTKR…IVSFAERGWI (123 aa)). Residues H173, H175, and D186 each coordinate Zn(2+). Residues 173–186 (HNHPSGVAEPSQAD) carry the JAMM motif motif.

It belongs to the UPF0758 family.

The protein is UPF0758 protein VSAL_I0192 of Aliivibrio salmonicida (strain LFI1238) (Vibrio salmonicida (strain LFI1238)).